An 876-amino-acid chain; its full sequence is Leucine--tRNA ligase (876 aa).

Residues 43-53 (PYPSGRIHMGH) carry the 'HIGH' region motif. A 'KMSKS' region motif is present at residues 632 to 636 (KMSKS). Lys-635 lines the ATP pocket.

Belongs to the class-I aminoacyl-tRNA synthetase family.

Its subcellular location is the cytoplasm. The catalysed reaction is tRNA(Leu) + L-leucine + ATP = L-leucyl-tRNA(Leu) + AMP + diphosphate. This chain is Leucine--tRNA ligase, found in Rhizobium etli (strain ATCC 51251 / DSM 11541 / JCM 21823 / NBRC 15573 / CFN 42).